The following is a 237-amino-acid chain: Probable F-box protein At1g53815 (237 aa).

The F-box domain occupies 41-72 (ISNILSRLPLKSKAKCRCVSKLWSSIIRRPNY).

This Arabidopsis thaliana (Mouse-ear cress) protein is Probable F-box protein At1g53815.